We begin with the raw amino-acid sequence, 1342 residues long: DNA-directed RNA polymerase subunit beta (1342 aa).

The protein belongs to the RNA polymerase beta chain family. In terms of assembly, the RNAP catalytic core consists of 2 alpha, 1 beta, 1 beta' and 1 omega subunit. When a sigma factor is associated with the core the holoenzyme is formed, which can initiate transcription.

The catalysed reaction is RNA(n) + a ribonucleoside 5'-triphosphate = RNA(n+1) + diphosphate. Functionally, DNA-dependent RNA polymerase catalyzes the transcription of DNA into RNA using the four ribonucleoside triphosphates as substrates. This chain is DNA-directed RNA polymerase subunit beta, found in Buchnera aphidicola subsp. Acyrthosiphon pisum (strain 5A).